We begin with the raw amino-acid sequence, 328 residues long: Putative P2Y purinoceptor 10 (328 aa).

Topologically, residues 1-27 are extracellular; the sequence is MGSNSTSSAESNCNATYLPFQYSLYAT. 2 N-linked (GlcNAc...) asparagine glycosylation sites follow: Asn-4 and Asn-14. Residues 28-48 form a helical membrane-spanning segment; the sequence is TYIFIFIPGLLANSAALWVLC. Residues 49–56 are Cytoplasmic-facing; the sequence is RFISKKNK. Residues 57-77 form a helical membrane-spanning segment; the sequence is AIIFMINLSVADLAHILSLPL. Residues 78 to 91 lie on the Extracellular side of the membrane; sequence RIYYYINRHWPFQR. A helical transmembrane segment spans residues 92–112; that stretch reads ALCLLCFYLKYLNMYASIFFL. Residues Cys-94 and Cys-170 are joined by a disulfide bond. The Cytoplasmic portion of the chain corresponds to 113-137; the sequence is TCISLQRCLFLLKPFRARNWKRRYD. Residues 138–158 traverse the membrane as a helical segment; sequence VGISAVIWIVVGTACLPFPIL. Residues 159 to 182 lie on the Extracellular side of the membrane; the sequence is RNAGLANSTDSCFADLGYKQMDAV. The helical transmembrane segment at 183–203 threads the bilayer; it reads VLVTMVVIAELAGFVIPVITI. The Cytoplasmic portion of the chain corresponds to 204-233; sequence ACCTWKTTVSLKHPPIAFQGISERKKALRM. A helical membrane pass occupies residues 234 to 254; sequence VFMCAAVFVICFTPYHINFIF. Residues 255–277 are Extracellular-facing; the sequence is YTMVKESIITSCPTVKSTLYFHP. Residues 278–298 traverse the membrane as a helical segment; sequence FSLCLASLCCLLDPILYYFMA. Over 299-328 the chain is Cytoplasmic; sequence SEFRDQLSRHGSSVTRSRLMSRESGSSMVN.

The protein belongs to the G-protein coupled receptor 1 family.

It is found in the cell membrane. Its function is as follows. Putative receptor for purines coupled to G-proteins. The protein is Putative P2Y purinoceptor 10 (P2ry10) of Mus musculus (Mouse).